The following is a 243-amino-acid chain: MVLEATMILIDNSEWMINGDYIPTRFEAQKDTVHMIFNQKINDNPENMCGLMTIGDNSPQVLSTLTRDYGKFLSAMHDLPVRGNAKFGDGIQIAQLALKHRENKIQRQRIVAFVGSPIVEDEKNLIRLAKRMKKNNVAIDIIHIGELQNESALQHFIDAANSSDSCHLVSIPPSPQLLSDLVNQSPIGQGVVASQNQFEYGVDPNLDVELALALELSMAEERARQEVAAQKSSEETEDKKMQE.

In terms of domain architecture, VWFA spans 5 to 185 (ATMILIDNSE…QLLSDLVNQS (181 aa)). Residues 205–224 (NLDVELALALELSMAEERAR) enclose the UIM domain. Residues 223-243 (ARQEVAAQKSSEETEDKKMQE) form a disordered region. Basic and acidic residues predominate over residues 232-243 (SSEETEDKKMQE).

The protein belongs to the proteasome subunit S5A family. In terms of assembly, the 26S proteasome is composed of a core protease, known as the 20S proteasome, capped at one or both ends by the 19S regulatory complex (RC). The RC is composed of at least 18 different subunits in two subcomplexes, the base and the lid, which form the portions proximal and distal to the 20S proteolytic core, respectively. Interacts with uch2.

Its subcellular location is the nucleus. In terms of biological role, protects ubiquitin chains against dissambly by deubiquitinating enzymes thereby promoting protein degradation. The sequence is that of 26S proteasome regulatory subunit rpn10 (rpn10) from Schizosaccharomyces pombe (strain 972 / ATCC 24843) (Fission yeast).